The following is a 156-amino-acid chain: Small ribosomal subunit protein uS7 (156 aa).

This sequence belongs to the universal ribosomal protein uS7 family. In terms of assembly, part of the 30S ribosomal subunit. Contacts proteins S9 and S11.

Its function is as follows. One of the primary rRNA binding proteins, it binds directly to 16S rRNA where it nucleates assembly of the head domain of the 30S subunit. Is located at the subunit interface close to the decoding center, probably blocks exit of the E-site tRNA. This is Small ribosomal subunit protein uS7 from Maricaulis maris (strain MCS10) (Caulobacter maris).